The sequence spans 508 residues: Mevalonate kinase ERG12 (508 aa).

The tract at residues 1 to 46 is disordered; sequence MPPSNPAMVNGLNGSHANGNGNGHNHISDSGSETSGESSNGSGRRR. Low complexity predominate over residues 10–42; sequence NGLNGSHANGNGNGHNHISDSGSETSGESSNGS. ATP is bound by residues lysine 68, serine 200, and 205-211; that span reads GAGLGSS. 2 residues coordinate Mg(2+): serine 211 and glutamate 256. Residue aspartate 267 is the Proton acceptor of the active site.

This sequence belongs to the GHMP kinase family. Mevalonate kinase subfamily. In terms of assembly, homodimer. Mg(2+) serves as cofactor.

The protein resides in the cytoplasm. It localises to the cytosol. It catalyses the reaction (R)-mevalonate + ATP = (R)-5-phosphomevalonate + ADP + H(+). It participates in isoprenoid biosynthesis; isopentenyl diphosphate biosynthesis via mevalonate pathway; isopentenyl diphosphate from (R)-mevalonate: step 1/3. Mevalonate kinase; part of the second module of ergosterol biosynthesis pathway that includes the middle steps of the pathway. ERG12 converts mevalonate into 5-phosphomevalonate. The second module is carried out in the vacuole and involves the formation of farnesyl diphosphate, which is also an important intermediate in the biosynthesis of ubiquinone, dolichol, heme and prenylated proteins. Activity by the mevalonate kinase ERG12 (FG05912) first converts mevalonate into 5-phosphomevalonate. 5-phosphomevalonate is then further converted to 5-diphosphomevalonate by the phosphomevalonate kinase ERG8 (FG09764). The diphosphomevalonate decarboxylase ERG19 (FG10424) then produces isopentenyl diphosphate. The isopentenyl-diphosphate delta-isomerase IDI1 (FG09722) then catalyzes the 1,3-allylic rearrangement of the homoallylic substrate isopentenyl (IPP) to its highly electrophilic allylic isomer, dimethylallyl diphosphate (DMAPP). Finally the farnesyl diphosphate synthase ERG20 (FG06784) catalyzes the sequential condensation of isopentenyl pyrophosphate with dimethylallyl pyrophosphate, and then with the resultant geranylpyrophosphate to the ultimate product farnesyl pyrophosphate. This Gibberella zeae (strain ATCC MYA-4620 / CBS 123657 / FGSC 9075 / NRRL 31084 / PH-1) (Wheat head blight fungus) protein is Mevalonate kinase ERG12.